The sequence spans 490 residues: Phosphoglucosamine mutase (490 aa).

The active-site Phosphoserine intermediate is the Ser139. Mg(2+) is bound by residues Ser139, Asp279, Asp281, and Asp283. Position 139 is a phosphoserine (Ser139).

Belongs to the phosphohexose mutase family. The cofactor is Mg(2+). Activated by phosphorylation.

The enzyme catalyses alpha-D-glucosamine 1-phosphate = D-glucosamine 6-phosphate. In terms of biological role, catalyzes the conversion of glucosamine-6-phosphate to glucosamine-1-phosphate. The polypeptide is Phosphoglucosamine mutase (Nostoc sp. (strain PCC 7120 / SAG 25.82 / UTEX 2576)).